The sequence spans 700 residues: Calpain-2 catalytic subunit (700 aa).

An N-acetylalanine modification is found at Ala2. Residues 2-19 (AGIAAKLVKDREAAEGLG) constitute a propeptide, anchors to the small subunit. Residues 45-344 (LFQDPSFPAI…YSRLEICNLT (300 aa)) form the Calpain catalytic domain. Ca(2+)-binding residues include Ile89, Gly91, and Asp96. Residue Cys105 is part of the active site. Residues Glu175, Gln229, and Lys230 each coordinate Ca(2+). Catalysis depends on residues His262 and Asn286. Ca(2+)-binding residues include Glu292, Asp299, and Glu323. Positions 345 to 514 (PDTLTSDTYK…KKADYQAVDD (170 aa)) are domain III. The interval 515–529 (EIEANLEEFDISEDD) is linker. The tract at residues 530–700 (IDDGFRRLFA…LISWLCFSVL (171 aa)) is domain IV. Residues Ala542, Asp545, Glu547, Glu552, Asp585, Asp587, Ser589, Lys591, Glu596, Asp615, Asp617, Ser619, Thr621, Glu626, Asp658, and Asn661 each coordinate Ca(2+). 2 EF-hand domains span residues 572–605 (FSIE…TKIQ) and 602–637 (TKIQ…AGFK). An EF-hand 3 domain is found at 667 to 700 (VRLETLFKIFKQLDPENTGTIELDLISWLCFSVL).

This sequence belongs to the peptidase C2 family. As to quaternary structure, forms a heterodimer with a small (regulatory) subunit (CAPNS1). Interacts with CPEB3; this leads to cleavage of CPEB3. The cofactor is Ca(2+).

The protein resides in the cytoplasm. The protein localises to the cell membrane. It catalyses the reaction Broad endopeptidase specificity.. With respect to regulation, activated by 200-1000 micromolar concentrations of calcium and inhibited by calpastatin. Calcium-regulated non-lysosomal thiol-protease which catalyzes limited proteolysis of substrates involved in cytoskeletal remodeling and signal transduction. Proteolytically cleaves MYOC at 'Arg-226'. Proteolytically cleaves CPEB3 following neuronal stimulation which abolishes CPEB3 translational repressor activity, leading to translation of CPEB3 target mRNAs. In Macaca fascicularis (Crab-eating macaque), this protein is Calpain-2 catalytic subunit (CAPN2).